The primary structure comprises 545 residues: MYLSIIILPLLGSIVAGFFGRKVGVSGAQLITCLSVIITTGLAILAFFEVGFNNIPVTINLFRWIDSEWYNILWGFQFDSLTVAMLIPVLIISSLVHIYSISYMSHDPHNQRFFSYLSLFTFMMIILVTANNYLLMFVGWEGVGVCSYLLVSFWFTRIAANQSSMSAFLTNRVGDCFLTIGMFVVLWTLGNLDYATVFSLAPYINSDIATIIGICLLIGAMAKSSQVGLHVWLPMAMEGFFSRAFLKLHYMQEHPVLSLGPLRFSLFGKIQDQGQFAGNSIRSSSEITSEAFMLKESWFKWWFIGFVEGDGSFIINKDGYLEFRITQSSPDAQILFMIKKELGFGVVRKQDSVRNTHCYRVRDKNNLIKLISIFNGNIFLDTRKEQFKLWLNAFNLKYKENIPHIDSSFRPNLDNAWLSGFTDAEGCFTCSVYDNKSNTAKLVRLRYILSQKGNSSCMEYLAEILGGKKHLLKSYEGYNVTVNTTKLSPIVQYFNLYPLKTKKYITYFNWIKIYKLVIDKKHNDPENLLLIMKYKNNINKSDYNK.

The next 7 membrane-spanning stretches (helical) occupy residues Met-1–Arg-21, Leu-30–Val-50, Leu-81–Ile-101, Leu-119–Gly-139, Trp-140–Ala-160, Phe-177–Val-197, and Leu-200–Ala-220. Residues Met-1–Gly-239 form a ndh-5 exons 1 and 2 encoded region. A ndh-5 intron 2 encoded region spans residues Phe-240 to Lys-545.

This sequence in the N-terminal section; belongs to the complex I subunit 5 family. The protein in the C-terminal section; belongs to the LAGLIDADG endonuclease family.

The protein localises to the mitochondrion membrane. In terms of biological role, mitochondrial DNA endonuclease involved in intron homing. The polypeptide is Probable intron-encoded endonuclease 4 (Neurospora crassa (strain ATCC 24698 / 74-OR23-1A / CBS 708.71 / DSM 1257 / FGSC 987)).